The following is a 237-amino-acid chain: DNA repair protein RecO (237 aa).

This sequence belongs to the RecO family.

Its function is as follows. Involved in DNA repair and RecF pathway recombination. This Actinobacillus succinogenes (strain ATCC 55618 / DSM 22257 / CCUG 43843 / 130Z) protein is DNA repair protein RecO.